Reading from the N-terminus, the 381-residue chain is tRNA (guanine(6)-N2)-methyltransferase (381 aa).

Residues 43–157 form the THUMP domain; sequence KLIPKINYLS…FDELIVGIDT (115 aa). Residues 173-177, 204-206, aspartate 261, 289-290, and asparagine 306 contribute to the S-adenosyl-L-methionine site; these read HPAHL, SGT, and DA.

The protein belongs to the methyltransferase superfamily.

The protein resides in the cytoplasm. It carries out the reaction guanosine(6) in tRNA + S-adenosyl-L-methionine = N(2)-methylguanosine(6) in tRNA + S-adenosyl-L-homocysteine + H(+). S-adenosyl-L-methionine-dependent methyltransferase that catalyzes the methylation of the guanosine nucleotide at position 6 (m2G6) in tRNA(Cys). The sequence is that of tRNA (guanine(6)-N2)-methyltransferase from Methanocaldococcus jannaschii (strain ATCC 43067 / DSM 2661 / JAL-1 / JCM 10045 / NBRC 100440) (Methanococcus jannaschii).